The following is a 439-amino-acid chain: Ribosomal protein uS12 methylthiotransferase RimO (439 aa).

In terms of domain architecture, MTTase N-terminal spans 4–114; the sequence is PKVGFVSLGR…VVRAVHGVAP (111 aa). One can recognise a Radical SAM core domain in the interval 133–370; the sequence is LTPRHYAYLK…MEHQQAISTA (238 aa). 3 residues coordinate [4Fe-4S] cluster: C147, C151, and C154. The TRAM domain maps to 373-439; sequence STRVGREIDV…EYDLWGERIA (67 aa).

The protein belongs to the methylthiotransferase family. RimO subfamily. [4Fe-4S] cluster is required as a cofactor.

The protein localises to the cytoplasm. The catalysed reaction is L-aspartate(89)-[ribosomal protein uS12]-hydrogen + (sulfur carrier)-SH + AH2 + 2 S-adenosyl-L-methionine = 3-methylsulfanyl-L-aspartate(89)-[ribosomal protein uS12]-hydrogen + (sulfur carrier)-H + 5'-deoxyadenosine + L-methionine + A + S-adenosyl-L-homocysteine + 2 H(+). Its function is as follows. Catalyzes the methylthiolation of an aspartic acid residue of ribosomal protein uS12. This is Ribosomal protein uS12 methylthiotransferase RimO from Bordetella bronchiseptica (strain ATCC BAA-588 / NCTC 13252 / RB50) (Alcaligenes bronchisepticus).